The sequence spans 335 residues: Fructose-1,6-bisphosphatase class 1 (335 aa).

Mg(2+) is bound by residues Glu90, Asp112, Leu114, and Asp115. Substrate contacts are provided by residues 115-118 (DGSS), Asn210, and Lys276. Glu282 serves as a coordination point for Mg(2+).

It belongs to the FBPase class 1 family. Homotetramer. Mg(2+) is required as a cofactor.

The protein localises to the cytoplasm. It carries out the reaction beta-D-fructose 1,6-bisphosphate + H2O = beta-D-fructose 6-phosphate + phosphate. The protein operates within carbohydrate biosynthesis; gluconeogenesis. In Ectopseudomonas mendocina (strain ymp) (Pseudomonas mendocina), this protein is Fructose-1,6-bisphosphatase class 1.